A 372-amino-acid chain; its full sequence is Aminomethyltransferase (372 aa).

The protein belongs to the GcvT family. The glycine cleavage system is composed of four proteins: P, T, L and H.

The catalysed reaction is N(6)-[(R)-S(8)-aminomethyldihydrolipoyl]-L-lysyl-[protein] + (6S)-5,6,7,8-tetrahydrofolate = N(6)-[(R)-dihydrolipoyl]-L-lysyl-[protein] + (6R)-5,10-methylene-5,6,7,8-tetrahydrofolate + NH4(+). Its function is as follows. The glycine cleavage system catalyzes the degradation of glycine. The chain is Aminomethyltransferase from Prochlorococcus marinus (strain NATL2A).